The following is a 159-amino-acid chain: Cytochrome c-type biogenesis protein CcmE (159 aa).

Residues 1-7 (MTRKGRR) lie on the Cytoplasmic side of the membrane. Residues 8–28 (LVLIGAGLGVLALAAGLILSA) form a helical; Signal-anchor for type II membrane protein membrane-spanning segment. Topologically, residues 29–159 (LNDTIVFFRS…AAPVQRAPGS (131 aa)) are periplasmic. Heme-binding residues include histidine 121 and tyrosine 125. A disordered region spans residues 134–159 (LKKQGRWQEGGPAPGTAAPVQRAPGS).

This sequence belongs to the CcmE/CycJ family.

It localises to the cell inner membrane. Its function is as follows. Heme chaperone required for the biogenesis of c-type cytochromes. Transiently binds heme delivered by CcmC and transfers the heme to apo-cytochromes in a process facilitated by CcmF and CcmH. The chain is Cytochrome c-type biogenesis protein CcmE from Xanthobacter autotrophicus (strain ATCC BAA-1158 / Py2).